The following is a 165-amino-acid chain: Phosphopantetheine adenylyltransferase (165 aa).

Ser9 provides a ligand contact to substrate. Residues 9–10 and His17 contribute to the ATP site; that span reads SF. Substrate is bound by residues Lys41, Val73, and Arg87. ATP is bound by residues 88-90, Glu98, and 123-129; these read GLR and FTLLSSS.

Belongs to the bacterial CoaD family. In terms of assembly, homohexamer. Requires Mg(2+) as cofactor.

It is found in the cytoplasm. It catalyses the reaction (R)-4'-phosphopantetheine + ATP + H(+) = 3'-dephospho-CoA + diphosphate. The protein operates within cofactor biosynthesis; coenzyme A biosynthesis; CoA from (R)-pantothenate: step 4/5. Reversibly transfers an adenylyl group from ATP to 4'-phosphopantetheine, yielding dephospho-CoA (dPCoA) and pyrophosphate. In Herpetosiphon aurantiacus (strain ATCC 23779 / DSM 785 / 114-95), this protein is Phosphopantetheine adenylyltransferase.